The following is a 197-amino-acid chain: 7-methyl-GTP pyrophosphatase (197 aa).

The active-site Proton acceptor is aspartate 73.

It belongs to the Maf family. YceF subfamily. A divalent metal cation serves as cofactor.

It localises to the cytoplasm. The catalysed reaction is N(7)-methyl-GTP + H2O = N(7)-methyl-GMP + diphosphate + H(+). Its function is as follows. Nucleoside triphosphate pyrophosphatase that hydrolyzes 7-methyl-GTP (m(7)GTP). May have a dual role in cell division arrest and in preventing the incorporation of modified nucleotides into cellular nucleic acids. This Alcanivorax borkumensis (strain ATCC 700651 / DSM 11573 / NCIMB 13689 / SK2) protein is 7-methyl-GTP pyrophosphatase.